The chain runs to 116 residues: MIEELGKIDRIIQESVPGKQITLAHVIAAPIEAVYECLGVDHEGAIGVVSLTPNETAIIAADIAGKAANIDICFVDRFTGSVMFSGDIQSVETSLEDILEYFKNSLGFSTVPLTKS.

One can recognise a BMC circularly permuted domain in the interval 10–108; that stretch reads RIIQESVPGK…LEYFKNSLGF (99 aa).

Belongs to the EutS/PduU family. Has been crystallized in 5 structures (all are mutated, 3 have an N-terminal His-tag), most are homohexameric with a central pore. In two the homohexamer lies flat with a beta-barrel on the flat face created by the protruding N termini of the six chains. In 2 others the hexamer is not flat but has a six-fold screw axis; the screw pitch is 33.8 or 41.9 Angstroms depending on the structure. Interacts with the BMC major shell protein.

The protein resides in the bacterial microcompartment. Its pathway is amine and polyamine metabolism; choline degradation. A minor shell protein of the choline degradation-specific bacterial microcompartment (BMC). Proteins such as this one with circularly permuted BMC domains may play a key role in conferring heterogeneity and flexibility in this BMC. This chain is Bacterial microcompartment shell protein CutR, found in Streptococcus intermedius (strain ATCC 27335 / DSM 20573 / CCUG 32759 / CIP 103248 / JCM 12996 / LMG 17840 / NCTC 11324 / SK54 / 1877).